The sequence spans 286 residues: MTAKLIDGLALSKTLRADVAARAAALTARGHQPGLAVVLVGDNPASEVYVRNKVKACHDNGLGSSFDRYPADLPEAELLARIDELNRDPRIHGILVQLPLPPHIDSHKVIEAIAPEKDVDGFHVANAGALMTGQPLFRPCTPYGVMKMLAAYEIPLQGANAVVIGRSNIVGKPMALLLLEAGATVTICHSKTRDLAAHTRNADVVVAATGLRNILTADMVKPGAAVIDVGMNRDEAGKLCGDVDFAGVKEVAGYITPVPGGVGPMTITMLLVNTIEAAEREAAANA.

NADP(+)-binding positions include 165-167 and serine 190; that span reads GRS.

Belongs to the tetrahydrofolate dehydrogenase/cyclohydrolase family. As to quaternary structure, homodimer.

It catalyses the reaction (6R)-5,10-methylene-5,6,7,8-tetrahydrofolate + NADP(+) = (6R)-5,10-methenyltetrahydrofolate + NADPH. The enzyme catalyses (6R)-5,10-methenyltetrahydrofolate + H2O = (6R)-10-formyltetrahydrofolate + H(+). It participates in one-carbon metabolism; tetrahydrofolate interconversion. In terms of biological role, catalyzes the oxidation of 5,10-methylenetetrahydrofolate to 5,10-methenyltetrahydrofolate and then the hydrolysis of 5,10-methenyltetrahydrofolate to 10-formyltetrahydrofolate. This chain is Bifunctional protein FolD, found in Paraburkholderia xenovorans (strain LB400).